Consider the following 1902-residue polypeptide: PI-type proteinase (1902 aa).

The signal sequence occupies residues 1-33 (MQRKKKGLSILLAGTVALGALAVLPVGEIQAKA). Residues 34-187 (AISQQTKGSS…VTLAKVYYPT (154 aa)) constitute a propeptide that is removed on maturation. The Peptidase S8 domain maps to 191 to 697 (ANSMANVQAV…AGLVDVKAAI (507 aa)). Catalysis depends on charge relay system residues D217, H281, and S620. Residues 1796–1874 (GKGDGTTGTS…GALPKTGETT (79 aa)) form a disordered region. A compositionally biased stretch (gly residues) spans 1797–1812 (KGDGTTGTSDKGGGQG). Residues 1830–1843 (SQPSSGGNIPTNPA) show a composition bias toward polar residues. The short motif at 1867 to 1871 (LPKTG) is the LPXTG sorting signal element. At T1870 the chain carries Pentaglycyl murein peptidoglycan amidated threonine. A propeptide spans 1871–1902 (GETTERPAFGFLGVIVVILMGVLGLKRKQREE) (removed by sortase).

Belongs to the peptidase S8 family.

It is found in the secreted. The protein localises to the cell wall. It carries out the reaction Endopeptidase activity with very broad specificity, although some subsite preference have been noted, e.g. large hydrophobic residues in the P1 and P4 positions, and Pro in the P2 position. Best known for its action on caseins, although it has been shown to hydrolyze hemoglobin and oxidized insulin B-chain.. Functionally, protease which breaks down milk proteins during the growth of the bacteria on milk. In Lactococcus lactis subsp. cremoris (Streptococcus cremoris), this protein is PI-type proteinase (prtP).